A 340-amino-acid polypeptide reads, in one-letter code: Phenylalanine--tRNA ligase alpha subunit (340 aa).

E251 is a Mg(2+) binding site.

This sequence belongs to the class-II aminoacyl-tRNA synthetase family. Phe-tRNA synthetase alpha subunit type 1 subfamily. As to quaternary structure, tetramer of two alpha and two beta subunits. Mg(2+) is required as a cofactor.

It localises to the cytoplasm. The enzyme catalyses tRNA(Phe) + L-phenylalanine + ATP = L-phenylalanyl-tRNA(Phe) + AMP + diphosphate + H(+). This Porphyromonas gingivalis (strain ATCC 33277 / DSM 20709 / CIP 103683 / JCM 12257 / NCTC 11834 / 2561) protein is Phenylalanine--tRNA ligase alpha subunit.